The following is a 301-amino-acid chain: 4-diphosphocytidyl-2-C-methyl-D-erythritol kinase (301 aa).

K18 is a catalytic residue. 109–119 (PIASGIGGGSA) serves as a coordination point for ATP. D151 is a catalytic residue.

Belongs to the GHMP kinase family. IspE subfamily.

The enzyme catalyses 4-CDP-2-C-methyl-D-erythritol + ATP = 4-CDP-2-C-methyl-D-erythritol 2-phosphate + ADP + H(+). It functions in the pathway isoprenoid biosynthesis; isopentenyl diphosphate biosynthesis via DXP pathway; isopentenyl diphosphate from 1-deoxy-D-xylulose 5-phosphate: step 3/6. Its function is as follows. Catalyzes the phosphorylation of the position 2 hydroxy group of 4-diphosphocytidyl-2C-methyl-D-erythritol. The protein is 4-diphosphocytidyl-2-C-methyl-D-erythritol kinase of Rhizobium meliloti (strain 1021) (Ensifer meliloti).